A 345-amino-acid polypeptide reads, in one-letter code: Protein GAMETE CELL DEFECTIVE 1, mitochondrial (345 aa).

The transit peptide at 1-43 (MLALRKTLLHGRLPAAPPAAAAAAIASRIPALLRRLSSSPGDG) directs the protein to the mitochondrion. Residues 36 to 81 (LSSSPGDGQGGDEWGSSWSTGITKEHFDGSDAAVGRPVTSPSKPVS) form a disordered region.

As to expression, expressed in roots, stems, leaves and florets.

Its subcellular location is the mitochondrion. Its function is as follows. Essential for fertility (male and female gametophyte functions and development). Required for the integrity of female gametic mitochondria. Involved in embryo apical-basal patterning, and particularly dorsal-ventral patterning, during early embryogenesis, and endosperm free nucleus positioning and development as well as early endosperm development, probably by modulating the expression pattern of related genes (e.g. AL1, MYB3/AL2, CYP78A13/GE, PNH1, HAZ1, MPK6 and OSH1). Has function in triggering of endosperm programmed cell death (PCD) leading to syncytial endosperm cellularization and starchy endosperm cell maturation. Implicated in central vacuole dynamics necessary for microspore development leading to pollen production, and for pollen development and germination. The sequence is that of Protein GAMETE CELL DEFECTIVE 1, mitochondrial from Oryza sativa subsp. japonica (Rice).